The primary structure comprises 369 residues: tRNA pseudouridine synthase D (369 aa).

Asp80 functions as the Nucleophile in the catalytic mechanism. The TRUD domain maps to 156 to 318 (GIPNWFGEQR…LKQERRALRL (163 aa)).

This sequence belongs to the pseudouridine synthase TruD family.

The catalysed reaction is uridine(13) in tRNA = pseudouridine(13) in tRNA. Functionally, responsible for synthesis of pseudouridine from uracil-13 in transfer RNAs. This is tRNA pseudouridine synthase D from Xanthomonas oryzae pv. oryzae (strain KACC10331 / KXO85).